Here is a 246-residue protein sequence, read N- to C-terminus: MTILFLTMVISYLSCMKATPMKEVSIRGQGSLAYPGLRTQGNLETLSGPNDATRGLTSLADTFEHVIEELLDERQVIQPSKENKDADLYSSRVMLSSQVPLEPPLLFLLEEYKNYLDAANMSMRVRRHSDPARRGELSVCDSTSEWVTAAEKKTAVDMSGATVTVLEKVPVPKGQLKQYFYETKCSTKGYAKEGCRGIDKRYWNSQCRTTQSYVRALTTDNKKRVGWRFIRIDTSCVCTLTIKRGR.

A signal peptide spans 1-18 (MTILFLTMVISYLSCMKA). A propeptide spanning residues 19–127 (TPMKEVSIRG…AANMSMRVRR (109 aa)) is cleaved from the precursor. Residue Asn-120 is glycosylated (N-linked (GlcNAc...) asparagine). Intrachain disulfides connect Cys-140-Cys-207, Cys-185-Cys-236, and Cys-195-Cys-238.

Belongs to the NGF-beta family.

The protein resides in the secreted. Functionally, promotes the survival of neuronal populations that are all located either in the central nervous system or directly connected to it. The protein is Neurotrophic factor BDNF precursor form (BDNF) of Ptyas major (Chinese green snake).